Consider the following 419-residue polypeptide: Serine/threonine-protein kinase Kist (419 aa).

The Protein kinase domain maps to 23 to 304; sequence WQVQSRLGSG…AEMALCSPFF (282 aa). ATP-binding positions include 29 to 37 and K54; that span reads LGSGSSASV. Active-site proton acceptor residues include D141 and D158. Residues 324–406 enclose the RRM domain; sequence RLLNVLDDDY…KFVVATFYPL (83 aa).

Belongs to the protein kinase superfamily. Ser/Thr protein kinase family. In terms of assembly, interacts with stathmin and CDKN1B/p27Kip1 Interacts with PAM. In terms of tissue distribution, in the embryo, preferentially expressed in the developing nervous system.

It is found in the cytoplasm. Its subcellular location is the nucleus. It carries out the reaction L-seryl-[protein] + ATP = O-phospho-L-seryl-[protein] + ADP + H(+). It catalyses the reaction L-threonyl-[protein] + ATP = O-phospho-L-threonyl-[protein] + ADP + H(+). In terms of biological role, upon serum stimulation, phosphorylates CDKN1B/p27Kip1, thus controlling CDKN1B subcellular location and cell cycle progression in G1 phase. May be involved in trafficking and/or processing of RNA. This Rattus norvegicus (Rat) protein is Serine/threonine-protein kinase Kist (Uhmk1).